The primary structure comprises 286 residues: Transcription factor bHLH137 (286 aa).

The segment covering 63–84 (SGSEKLANTTKTATTGSSSCDQ) has biased composition (polar residues). Residues 63-149 (SGSEKLANTT…RGQATDSHSL (87 aa)) are disordered. The region spanning 142–192 (QATDSHSLAERVRREKISERMRTLQNLVPGCDKVTGKALMLDEIINYVQTL) is the bHLH domain.

As to quaternary structure, homodimer.

Its subcellular location is the nucleus. This is Transcription factor bHLH137 (BHLH137) from Arabidopsis thaliana (Mouse-ear cress).